Here is a 94-residue protein sequence, read N- to C-terminus: Cell division protein CrgA (94 aa).

The next 2 helical transmembrane spans lie at 31-51 (VWFV…LLVF) and 71-91 (LGPW…LLTM).

Belongs to the CrgA family.

The protein localises to the cell membrane. In terms of biological role, involved in cell division. The polypeptide is Cell division protein CrgA (Mycobacterium sp. (strain JLS)).